A 282-amino-acid polypeptide reads, in one-letter code: MKKLSVIFLSVSMLSSIAFCDQDKVVATYKGGEVKESQIMQEFKPQLNLQSGETIKNFDDFPLQDQEKLIKIYVNNLLLKEEVAKSSITSSKEFQEKLENAKNQLAQQELLANYIKSNITDKMFDDEYNKYVDNLKGKEQIKVAHILVKSQKEANTVKTKLSKGGNFNKLAEEFSLDKATASNGGVIGYIILNQSGQLVPEFENKAFALKVNEVSTPVKTDFGWHIIKVLEKKPVPIPTKKEAKVTIDNILAAEILKKYISDLEAKADLKIMLPKANSKTGS.

Positions Met-1–Cys-20 are cleaved as a signal peptide. A PpiC domain is found at Lys-138–Glu-231.

Belongs to the PpiC/parvulin rotamase family.

The protein resides in the cell outer membrane. It catalyses the reaction [protein]-peptidylproline (omega=180) = [protein]-peptidylproline (omega=0). This Rickettsia typhi (strain ATCC VR-144 / Wilmington) protein is Parvulin-like PPIase (plp).